Reading from the N-terminus, the 32-residue chain is MSDIN-like toxin proprotein a (32 aa).

A propeptide spanning residues 1-10 (MSDINATRLP) is cleaved from the precursor. The segment at residues 11 to 18 (IIGILLPP) is a cross-link (cyclopeptide (Ile-Pro)). A propeptide spanning residues 19–32 (CIGDDVTLLLTRGE) is cleaved from the precursor.

Belongs to the MSDIN fungal toxin family. Processed by the macrocyclase-peptidase enzyme POPB to yield a toxic cyclic octapeptide. POPB first removes 10 residues from the N-terminus. Conformational trapping of the remaining peptide forces the enzyme to release this intermediate rather than proceed to macrocyclization. The enzyme rebinds the remaining peptide in a different conformation and catalyzes macrocyclization of the N-terminal 8 residues.

Probable toxin that belongs to the MSDIN-like toxin family responsible for a large number of food poisoning cases and deaths. This chain is MSDIN-like toxin proprotein a, found in Amanita phalloides (Death cap).